A 310-amino-acid chain; its full sequence is Methionyl-tRNA formyltransferase (310 aa).

Ser111 to Pro114 provides a ligand contact to (6S)-5,6,7,8-tetrahydrofolate.

This sequence belongs to the Fmt family.

The enzyme catalyses L-methionyl-tRNA(fMet) + (6R)-10-formyltetrahydrofolate = N-formyl-L-methionyl-tRNA(fMet) + (6S)-5,6,7,8-tetrahydrofolate + H(+). Attaches a formyl group to the free amino group of methionyl-tRNA(fMet). The formyl group appears to play a dual role in the initiator identity of N-formylmethionyl-tRNA by promoting its recognition by IF2 and preventing the misappropriation of this tRNA by the elongation apparatus. The polypeptide is Methionyl-tRNA formyltransferase (Methylobacterium nodulans (strain LMG 21967 / CNCM I-2342 / ORS 2060)).